We begin with the raw amino-acid sequence, 240 residues long: Large ribosomal subunit protein uL2 (240 aa).

A compositionally biased stretch (polar residues) spans 1–11 (MGKRLISQNRG). Disordered stretches follow at residues 1 to 25 (MGKR…HKRK) and 207 to 240 (GGRH…TGKR). Basic residues-rich tracts occupy residues 13 to 25 (GTPK…HKRK) and 224 to 240 (SPGR…TGKR).

It belongs to the universal ribosomal protein uL2 family. Part of the 50S ribosomal subunit. Forms a bridge to the 30S subunit in the 70S ribosome.

Functionally, one of the primary rRNA binding proteins. Required for association of the 30S and 50S subunits to form the 70S ribosome, for tRNA binding and peptide bond formation. It has been suggested to have peptidyltransferase activity; this is somewhat controversial. Makes several contacts with the 16S rRNA in the 70S ribosome. In Methanococcus maripaludis (strain DSM 14266 / JCM 13030 / NBRC 101832 / S2 / LL), this protein is Large ribosomal subunit protein uL2.